The sequence spans 270 residues: Mlc titration factor A (270 aa).

Zn(2+) is bound by residues histidine 111, histidine 148, histidine 152, and glutamate 211.

This sequence belongs to the MtfA family. As to quaternary structure, interacts with Mlc. Zn(2+) is required as a cofactor.

It is found in the cytoplasm. Involved in the modulation of the activity of the glucose-phosphotransferase system (glucose-PTS). Interacts with the transcriptional repressor Mlc, preventing its interaction with DNA and leading to the modulation of expression of genes regulated by Mlc, including ptsG, which encodes the PTS system glucose-specific EIICB component. Functionally, shows zinc-dependent metallopeptidase activity. In Yersinia pestis bv. Antiqua (strain Nepal516), this protein is Mlc titration factor A.